The sequence spans 291 residues: ATP phosphoribosyltransferase (291 aa).

It belongs to the ATP phosphoribosyltransferase family. Long subfamily. It depends on Mg(2+) as a cofactor.

The protein resides in the cytoplasm. It catalyses the reaction 1-(5-phospho-beta-D-ribosyl)-ATP + diphosphate = 5-phospho-alpha-D-ribose 1-diphosphate + ATP. Its pathway is amino-acid biosynthesis; L-histidine biosynthesis; L-histidine from 5-phospho-alpha-D-ribose 1-diphosphate: step 1/9. Its activity is regulated as follows. Feedback inhibited by histidine. In terms of biological role, catalyzes the condensation of ATP and 5-phosphoribose 1-diphosphate to form N'-(5'-phosphoribosyl)-ATP (PR-ATP). Has a crucial role in the pathway because the rate of histidine biosynthesis seems to be controlled primarily by regulation of HisG enzymatic activity. The protein is ATP phosphoribosyltransferase of Trichlorobacter lovleyi (strain ATCC BAA-1151 / DSM 17278 / SZ) (Geobacter lovleyi).